Here is a 194-residue protein sequence, read N- to C-terminus: MIRIDELLRAYRRGYFPMSDPEDEKVYWCQPYKRAVFCLDSYRPSRDVLRLTRKKEFTVTLDKEFAGVIKGCAAPRKNDHETWISDEIIEAYTKLHSLGIAHSFESWYQGELVGGLYGIALGGAFFGESMFSRRSYASRIAFDHLVFHLREKGYLLLDAQIMNPHLQRLGAVEIEHEEYMRQLAHALQKKIVFL.

It belongs to the L/F-transferase family.

The protein localises to the cytoplasm. The catalysed reaction is N-terminal L-lysyl-[protein] + L-leucyl-tRNA(Leu) = N-terminal L-leucyl-L-lysyl-[protein] + tRNA(Leu) + H(+). It carries out the reaction N-terminal L-arginyl-[protein] + L-leucyl-tRNA(Leu) = N-terminal L-leucyl-L-arginyl-[protein] + tRNA(Leu) + H(+). It catalyses the reaction L-phenylalanyl-tRNA(Phe) + an N-terminal L-alpha-aminoacyl-[protein] = an N-terminal L-phenylalanyl-L-alpha-aminoacyl-[protein] + tRNA(Phe). In terms of biological role, functions in the N-end rule pathway of protein degradation where it conjugates Leu, Phe and, less efficiently, Met from aminoacyl-tRNAs to the N-termini of proteins containing an N-terminal arginine or lysine. This is Leucyl/phenylalanyl-tRNA--protein transferase from Pelodictyon phaeoclathratiforme (strain DSM 5477 / BU-1).